We begin with the raw amino-acid sequence, 282 residues long: Undecaprenyl-diphosphatase 1 (282 aa).

Helical transmembrane passes span 1-21 (MLLL…VLPL), 46-66 (GVAL…LYFW), 91-111 (AFLV…LAHF), 117-137 (SPGL…LGVI), 150-170 (MGGI…LPGV), 193-213 (FSML…GLDL), 226-246 (LIAA…MMAW), and 260-280 (VLLG…APFL).

The protein belongs to the UppP family.

The protein localises to the cell inner membrane. The enzyme catalyses di-trans,octa-cis-undecaprenyl diphosphate + H2O = di-trans,octa-cis-undecaprenyl phosphate + phosphate + H(+). In terms of biological role, catalyzes the dephosphorylation of undecaprenyl diphosphate (UPP). Confers resistance to bacitracin. The chain is Undecaprenyl-diphosphatase 1 from Rhodospirillum rubrum (strain ATCC 11170 / ATH 1.1.1 / DSM 467 / LMG 4362 / NCIMB 8255 / S1).